The chain runs to 629 residues: Chaperone protein DnaK (629 aa).

Position 195 is a phosphothreonine; by autocatalysis (Thr195). Disordered stretches follow at residues 514 to 533 and 543 to 629; these read EAEQ…EKRN and LGQL…KPAE. Residues 555-590 show a composition bias toward basic and acidic residues; sequence DAKDRLKAAADEAEEAVRSDDDSRIERAQKQLEEAM. The segment covering 595 to 614 has biased composition (low complexity); it reads TAAQSGSQNQAGQGAQTQTG. Basic and acidic residues predominate over residues 615 to 629; it reads RQEDDVIDADFKPAE.

This sequence belongs to the heat shock protein 70 family.

Functionally, acts as a chaperone. The protein is Chaperone protein DnaK of Deinococcus geothermalis (strain DSM 11300 / CIP 105573 / AG-3a).